A 353-amino-acid chain; its full sequence is uncharacterized protein (353 aa).

An N-terminal signal peptide occupies residues 1-24; the sequence is MRVVERAVIACYLGITIFSGIAFG.

The protein belongs to the chlamydial CPn_1058/CT_355/TC_0634 family.

This is an uncharacterized protein from Chlamydia trachomatis serovar D (strain ATCC VR-885 / DSM 19411 / UW-3/Cx).